Reading from the N-terminus, the 796-residue chain is Quinoprotein glucose dehydrogenase (796 aa).

The Cytoplasmic portion of the chain corresponds to 1-10; that stretch reads MAINNTGSRR. The chain crosses the membrane as a helical span at residues 11–37; the sequence is LLVTLTALFAALCGLYLLIGGGWLVAI. Topologically, residues 38–40 are periplasmic; that stretch reads GGS. A helical membrane pass occupies residues 41-58; the sequence is WYYPIAGLVMLGVAWMLW. Residues 59-62 lie on the Cytoplasmic side of the membrane; that stretch reads RSKR. A helical membrane pass occupies residues 63 to 81; the sequence is AALWLYAALLLGTMIWGVW. Topologically, residues 82–95 are periplasmic; sequence EVGFDFWALTPRSD. Residues 96–110 traverse the membrane as a helical segment; it reads ILVFFGIWLILPFVW. At 111 to 118 the chain is on the cytoplasmic side; that stretch reads RRLVIPAS. Residues 119–141 traverse the membrane as a helical segment; sequence GAVAALVVALLISGGILTWAGFN. Topologically, residues 142–796 are periplasmic; the sequence is DPQEINGTLS…VAYALPDDVK (655 aa). The active-site Proton acceptor is aspartate 466.

This sequence belongs to the bacterial PQQ dehydrogenase family. In terms of assembly, monomer. It depends on pyrroloquinoline quinone as a cofactor.

It is found in the cell inner membrane. The catalysed reaction is a ubiquinone + D-glucose = D-glucono-1,5-lactone + a ubiquinol. Functionally, GDH is probably involved in energy conservation rather than in sugar metabolism. The chain is Quinoprotein glucose dehydrogenase (gcd) from Escherichia coli (strain K12).